We begin with the raw amino-acid sequence, 327 residues long: MLGFITRPPHQLLSLLCTGYRLPQISVLCTQPRPRAMAESSSTSWELPLVAVCQVTSTPNKQENFKTCAELVQEATRLGACLAFLPEAFDFIARNPAETLLLSEPLDGDLLGQYSQLARECGIWLSLGGFHERGQDWEQTQKIYNCHVLLNSKGSVVASYRKTHLCDVEIPGQGPMRESNYTMPGYALEPPVKTPAGKVGLAICYDMRFPELSLKLAQAGAEILTYPSAFGSVTGPAHWEVLLRARAIESQCYVIAAAQCGRHHETRASYGHSMVVDPWGTVVASCSEGPGLCLARIDLHFLQQMRQHLPVFQHRRPDLYGSLLPLS.

The transit peptide at 1-36 directs the protein to the mitochondrion; sequence MLGFITRPPHQLLSLLCTGYRLPQISVLCTQPRPRA. The CN hydrolase domain maps to 47 to 299; it reads LPLVAVCQVT…PGLCLARIDL (253 aa). The active-site Proton acceptor is the Glu87. The Proton donor role is filled by Lys162. Cys204 serves as the catalytic Nucleophile.

It belongs to the carbon-nitrogen hydrolase superfamily. NIT1/NIT2 family.

The protein localises to the mitochondrion. The protein resides in the cytoplasm. It carries out the reaction N-(4-oxoglutaryl)-L-cysteinylglycine + H2O = L-cysteinylglycine + 2-oxoglutarate. In terms of biological role, catalyzes the hydrolysis of the amide bond in N-(4-oxoglutarate)-L-cysteinylglycine (deaminated glutathione), a metabolite repair reaction to dispose of the harmful deaminated glutathione. Plays a role in cell growth and apoptosis: loss of expression promotes cell growth, resistance to DNA damage stress and increased incidence to NMBA-induced tumors. Has tumor suppressor properties that enhances the apoptotic responsiveness in cancer cells; this effect is additive to the tumor suppressor activity of FHIT. It is also a negative regulator of primary T-cells. This Rattus norvegicus (Rat) protein is Deaminated glutathione amidase (Nit1).